Reading from the N-terminus, the 127-residue chain is Small ribosomal subunit protein eS8 (127 aa).

Belongs to the eukaryotic ribosomal protein eS8 family. As to quaternary structure, part of the 30S ribosomal subunit.

The protein is Small ribosomal subunit protein eS8 (rps8e) of Pyrococcus horikoshii (strain ATCC 700860 / DSM 12428 / JCM 9974 / NBRC 100139 / OT-3).